The following is a 231-amino-acid chain: Uridylate kinase (231 aa).

ATP is bound at residue 6–9; it reads KLSG. Positions 14 to 19 are involved in allosteric activation by GTP; that stretch reads GEGGRG. The ATP site is built by Gly-49 and Arg-53. UMP-binding positions include Asp-66 and 127–134; that span reads TSNPFFTT. ATP contacts are provided by Thr-154, Tyr-160, and Asp-163.

The protein belongs to the UMP kinase family. As to quaternary structure, homohexamer.

It is found in the cytoplasm. The enzyme catalyses UMP + ATP = UDP + ADP. The protein operates within pyrimidine metabolism; CTP biosynthesis via de novo pathway; UDP from UMP (UMPK route): step 1/1. Its activity is regulated as follows. Allosterically activated by GTP. Inhibited by UTP. Its function is as follows. Catalyzes the reversible phosphorylation of UMP to UDP. This Thermotoga maritima (strain ATCC 43589 / DSM 3109 / JCM 10099 / NBRC 100826 / MSB8) protein is Uridylate kinase.